Reading from the N-terminus, the 247-residue chain is MPKRDAPWRLMAGTSKVSRSANYSPRGSLPKRDAWVNRPMYRKPRIYRSLRGPDVPKGCEGPCKVQSYEQRHDISLVGKVMCISDVTRGNGITHRVGKRFCVKSVYILGKIWMDENIKLKNHTNSVMFWLVRDRRPYGTPMDFGQVFNMFDNEPSTATVKNDLRDRFQVIHRFHAKVTGGQYASNEQALVRRFWKVNNNVVYNHQEAGKYENHTENALLLYMACTHASNPVYATLKIRIYFYDSITN.

A Bipartite nuclear localization signal motif is present at residues 3 to 20 (KRDAPWRLMAGTSKVSRS). The Nuclear localization signal motif lies at 31 to 45 (KRDAWVNRPMYRKPR). The Nuclear export signal motif lies at 92–113 (ITHRVGKRFCVKSVYILGKIWM). The short motif at 191-238 (RRFWKVNNNVVYNHQEAGKYENHTENALLLYMACTHASNPVYATLKIR) is the Bipartite nuclear localization signal element.

This sequence belongs to the geminiviridae capsid protein family. In terms of assembly, homomultimer. Binds to single-stranded and double-stranded viral DNA. Interacts (via nuclear localization signals) with host importin alpha-1a.

Its subcellular location is the virion. It localises to the host nucleus. Encapsidates the viral DNA into characteristic twinned ('geminate') particles. Binds the genomic viral ssDNA and shuttles it into and out of the cell nucleus. The CP of bipartite geminiviruses is not required for cell-to-cell or systemic movement. The chain is Capsid protein from Solanum lycopersicum (Tomato).